The sequence spans 323 residues: uncharacterized protein (323 aa).

The interval 1-21 (MGSYYSTESTKSNESNETTNN) is disordered. Gly2 carries N-myristoyl glycine; by host lipidation.

This is an uncharacterized protein from Acanthamoeba polyphaga (Amoeba).